The primary structure comprises 201 residues: 3-isopropylmalate dehydratase small subunit (201 aa).

The protein belongs to the LeuD family. LeuD type 1 subfamily. As to quaternary structure, heterodimer of LeuC and LeuD.

The catalysed reaction is (2R,3S)-3-isopropylmalate = (2S)-2-isopropylmalate. The protein operates within amino-acid biosynthesis; L-leucine biosynthesis; L-leucine from 3-methyl-2-oxobutanoate: step 2/4. Functionally, catalyzes the isomerization between 2-isopropylmalate and 3-isopropylmalate, via the formation of 2-isopropylmaleate. The chain is 3-isopropylmalate dehydratase small subunit from Shewanella putrefaciens (strain CN-32 / ATCC BAA-453).